The following is a 945-amino-acid chain: Isoleucine--tRNA ligase (945 aa).

Residues 66 to 76 carry the 'HIGH' region motif; that stretch reads PYANGDIHLGH. Glu581 contacts L-isoleucyl-5'-AMP. A 'KMSKS' region motif is present at residues 622–626; it reads KMSKS. Lys625 lines the ATP pocket. The Zn(2+) site is built by Cys908, Cys911, Cys928, and Cys931.

Belongs to the class-I aminoacyl-tRNA synthetase family. IleS type 1 subfamily. Monomer. Requires Zn(2+) as cofactor.

The protein localises to the cytoplasm. It catalyses the reaction tRNA(Ile) + L-isoleucine + ATP = L-isoleucyl-tRNA(Ile) + AMP + diphosphate. Functionally, catalyzes the attachment of isoleucine to tRNA(Ile). As IleRS can inadvertently accommodate and process structurally similar amino acids such as valine, to avoid such errors it has two additional distinct tRNA(Ile)-dependent editing activities. One activity is designated as 'pretransfer' editing and involves the hydrolysis of activated Val-AMP. The other activity is designated 'posttransfer' editing and involves deacylation of mischarged Val-tRNA(Ile). This Burkholderia lata (strain ATCC 17760 / DSM 23089 / LMG 22485 / NCIMB 9086 / R18194 / 383) protein is Isoleucine--tRNA ligase.